Reading from the N-terminus, the 67-residue chain is Large ribosomal subunit protein bL35 (67 aa).

The protein belongs to the bacterial ribosomal protein bL35 family.

In Caldanaerobacter subterraneus subsp. tengcongensis (strain DSM 15242 / JCM 11007 / NBRC 100824 / MB4) (Thermoanaerobacter tengcongensis), this protein is Large ribosomal subunit protein bL35.